We begin with the raw amino-acid sequence, 345 residues long: Ribosome production factor 1 (345 aa).

2 disordered regions span residues 1-57 (MAKA…ISEI) and 70-105 (WKQQQRKEKLAAKKKLKREREALGDKAPPKPVPKTI). Basic and acidic residues predominate over residues 87 to 97 (REREALGDKAP). The 184-residue stretch at 142-325 (PKILITTSDR…LRSLQKGTFD (184 aa)) folds into the Brix domain. The segment at 303–320 (VGIQELGPRFTLKLRSLQ) is RNA-binding.

The protein resides in the nucleus. It is found in the nucleolus. May be required for ribosome biogenesis. The sequence is that of Ribosome production factor 1 (Rpf1) from Rattus norvegicus (Rat).